The chain runs to 129 residues: NADH-quinone oxidoreductase subunit A (129 aa).

The next 3 membrane-spanning stretches (helical) occupy residues 9 to 29 (FPIGVVLLVAVVLAFTMLGLA), 68 to 88 (LLFIVFDIEAIFLYPWAVLLL), and 97 to 117 (LGWPGFVSMGIFVFTLVAGLV).

It belongs to the complex I subunit 3 family. As to quaternary structure, NDH-1 is composed of 14 different subunits. Subunits NuoA, H, J, K, L, M, N constitute the membrane sector of the complex.

It localises to the cell inner membrane. It catalyses the reaction a quinone + NADH + 5 H(+)(in) = a quinol + NAD(+) + 4 H(+)(out). NDH-1 shuttles electrons from NADH, via FMN and iron-sulfur (Fe-S) centers, to quinones in the respiratory chain. The immediate electron acceptor for the enzyme in this species is believed to be ubiquinone. Couples the redox reaction to proton translocation (for every two electrons transferred, four hydrogen ions are translocated across the cytoplasmic membrane), and thus conserves the redox energy in a proton gradient. This chain is NADH-quinone oxidoreductase subunit A, found in Anaeromyxobacter sp. (strain K).